The primary structure comprises 173 residues: MPLNIEDKKAVVAEVSAQVAKAQTIVVAEYRGITVGDLTKLRSTARQQGVYLRVLKNTLARRAVEGTPFASLAEQMTGPLIYGISEDAVSSAKVLNDFAKTNDKLVLRAGSYDGKVLDAAAVKALASIPSRDELIAQLLGVMQAPVSGFARLLAALAAKNAEGAPAEAEAAGA.

This sequence belongs to the universal ribosomal protein uL10 family. Part of the ribosomal stalk of the 50S ribosomal subunit. The N-terminus interacts with L11 and the large rRNA to form the base of the stalk. The C-terminus forms an elongated spine to which L12 dimers bind in a sequential fashion forming a multimeric L10(L12)X complex.

Forms part of the ribosomal stalk, playing a central role in the interaction of the ribosome with GTP-bound translation factors. This chain is Large ribosomal subunit protein uL10, found in Cupriavidus necator (strain ATCC 17699 / DSM 428 / KCTC 22496 / NCIMB 10442 / H16 / Stanier 337) (Ralstonia eutropha).